The primary structure comprises 472 residues: L-fuculokinase (472 aa).

This sequence belongs to the FGGY kinase family. It depends on a divalent metal cation as a cofactor.

It catalyses the reaction L-fuculose + ATP = L-fuculose 1-phosphate + ADP + H(+). Its pathway is carbohydrate degradation; L-fucose degradation; L-lactaldehyde and glycerone phosphate from L-fucose: step 2/3. In terms of biological role, catalyzes the phosphorylation of L-fuculose. This Salmonella typhi protein is L-fuculokinase.